Consider the following 383-residue polypeptide: S-adenosylmethionine synthase (383 aa).

Residue His-15 participates in ATP binding. Asp-17 provides a ligand contact to Mg(2+). A K(+)-binding site is contributed by Glu-43. L-methionine is bound by residues Glu-56 and Gln-99. A flexible loop region spans residues 99–109; the sequence is QSPDINQGVDR. ATP-binding positions include 164 to 166, 230 to 231, Asp-239, 245 to 246, Ala-262, and Lys-266; these read DAK, RF, and RK. Residue Asp-239 coordinates L-methionine. Lys-270 serves as a coordination point for L-methionine.

The protein belongs to the AdoMet synthase family. Homotetramer; dimer of dimers. The cofactor is Mg(2+). K(+) is required as a cofactor.

The protein resides in the cytoplasm. The enzyme catalyses L-methionine + ATP + H2O = S-adenosyl-L-methionine + phosphate + diphosphate. It functions in the pathway amino-acid biosynthesis; S-adenosyl-L-methionine biosynthesis; S-adenosyl-L-methionine from L-methionine: step 1/1. Its function is as follows. Catalyzes the formation of S-adenosylmethionine (AdoMet) from methionine and ATP. The overall synthetic reaction is composed of two sequential steps, AdoMet formation and the subsequent tripolyphosphate hydrolysis which occurs prior to release of AdoMet from the enzyme. This chain is S-adenosylmethionine synthase, found in Shewanella sp. (strain W3-18-1).